The primary structure comprises 239 residues: Putative ABC transporter ATP-binding protein BR1368/BS1330_I1363 (239 aa).

Positions 5 to 234 constitute an ABC transporter domain; sequence LSLDRVSVSR…EQVHLHYVEA (230 aa). Position 37–44 (37–44) interacts with ATP; the sequence is GDNGVGKT.

Belongs to the ABC transporter superfamily.

It localises to the cell inner membrane. Probably part of an ABC transporter complex. Responsible for energy coupling to the transport system. In Brucella suis biovar 1 (strain 1330), this protein is Putative ABC transporter ATP-binding protein BR1368/BS1330_I1363.